Consider the following 91-residue polypeptide: Potassium channel toxin AaTXK-beta (91 aa).

The first 19 residues, 1-19, serve as a signal peptide directing secretion; the sequence is MQRNLVVLLFLGMVALSSC. The propeptide occupies 20–27; sequence GLREKHVQ. The BetaSPN-type CS-alpha/beta domain maps to 54–91; it reads QFGCPAYQGYCDDHCQDIKKEEGFCHGFKCKCGIPMGF. Cystine bridges form between cysteine 57-cysteine 78, cysteine 64-cysteine 83, and cysteine 68-cysteine 85.

Belongs to the long chain scorpion toxin family. Class 1 subfamily. In terms of assembly, monomer (both chains). In terms of tissue distribution, expressed by the venom gland.

The protein resides in the secreted. Its function is as follows. Inhibits voltage-gated potassium channels (Kv). Does not activate Kv7 channels. Functionally, peptide activator of Kv7.4/KCNQ4 channels. Also acts as a subtype-selective activator of channels formed by Kv7.3/KCNQ3, Kv7.2/Kv7.3 (KCNQ2/KCNQ3), Kv7.5/Kv7.3 (KCNQ3/KCNQ5) subunits. The chain is Potassium channel toxin AaTXK-beta from Androctonus australis (Sahara scorpion).